We begin with the raw amino-acid sequence, 446 residues long: Mannan endo-1,6-alpha-mannosidase DCW1 (446 aa).

A signal peptide spans 1–18 (MRLVTLLSGLVSLVSVFG). N-linked (GlcNAc...) asparagine glycans are attached at residues asparagine 31, asparagine 81, asparagine 106, asparagine 200, asparagine 222, asparagine 237, asparagine 262, asparagine 278, asparagine 285, asparagine 334, asparagine 391, and asparagine 397. The tract at residues 389–408 (PYNATNGGNSTGDGAAGTKP) is disordered. Serine 422 carries GPI-anchor amidated serine lipidation. The propeptide at 423-446 (RAGAGIITAIIGISIIACALWLVY) is removed in mature form.

The protein belongs to the glycosyl hydrolase 76 family.

The protein localises to the secreted. It localises to the cell wall. It is found in the cell membrane. The enzyme catalyses Random hydrolysis of (1-&gt;6)-alpha-D-mannosidic linkages in unbranched (1-&gt;6)-mannans.. In terms of biological role, required for normal synthesis of the cell wall. This Candida glabrata (strain ATCC 2001 / BCRC 20586 / JCM 3761 / NBRC 0622 / NRRL Y-65 / CBS 138) (Yeast) protein is Mannan endo-1,6-alpha-mannosidase DCW1 (DCW1).